A 332-amino-acid polypeptide reads, in one-letter code: Holliday junction branch migration complex subunit RuvB (332 aa).

Residues 1–181 (MTRFLDSDAM…FGITGHMEYY (181 aa)) form a large ATPase domain (RuvB-L) region. ATP is bound by residues Leu-20, Arg-21, Gly-62, Lys-65, Thr-66, Thr-67, 128-130 (EDF), Arg-171, Tyr-181, and Arg-218. Thr-66 is a Mg(2+) binding site. The tract at residues 182-252 (EENDLTEIIE…ITDKALTMLD (71 aa)) is small ATPAse domain (RuvB-S). Positions 255 to 332 (HEGLDYVDQK…EHLGYQRFDK (78 aa)) are head domain (RuvB-H). The DNA site is built by Arg-291, Arg-310, Arg-312, and Arg-315.

This sequence belongs to the RuvB family. Homohexamer. Forms an RuvA(8)-RuvB(12)-Holliday junction (HJ) complex. HJ DNA is sandwiched between 2 RuvA tetramers; dsDNA enters through RuvA and exits via RuvB. An RuvB hexamer assembles on each DNA strand where it exits the tetramer. Each RuvB hexamer is contacted by two RuvA subunits (via domain III) on 2 adjacent RuvB subunits; this complex drives branch migration. In the full resolvosome a probable DNA-RuvA(4)-RuvB(12)-RuvC(2) complex forms which resolves the HJ.

The protein resides in the cytoplasm. It catalyses the reaction ATP + H2O = ADP + phosphate + H(+). Its function is as follows. The RuvA-RuvB-RuvC complex processes Holliday junction (HJ) DNA during genetic recombination and DNA repair, while the RuvA-RuvB complex plays an important role in the rescue of blocked DNA replication forks via replication fork reversal (RFR). RuvA specifically binds to HJ cruciform DNA, conferring on it an open structure. The RuvB hexamer acts as an ATP-dependent pump, pulling dsDNA into and through the RuvAB complex. RuvB forms 2 homohexamers on either side of HJ DNA bound by 1 or 2 RuvA tetramers; 4 subunits per hexamer contact DNA at a time. Coordinated motions by a converter formed by DNA-disengaged RuvB subunits stimulates ATP hydrolysis and nucleotide exchange. Immobilization of the converter enables RuvB to convert the ATP-contained energy into a lever motion, pulling 2 nucleotides of DNA out of the RuvA tetramer per ATP hydrolyzed, thus driving DNA branch migration. The RuvB motors rotate together with the DNA substrate, which together with the progressing nucleotide cycle form the mechanistic basis for DNA recombination by continuous HJ branch migration. Branch migration allows RuvC to scan DNA until it finds its consensus sequence, where it cleaves and resolves cruciform DNA. This is Holliday junction branch migration complex subunit RuvB from Streptococcus agalactiae serotype Ia (strain ATCC 27591 / A909 / CDC SS700).